Consider the following 315-residue polypeptide: 4-hydroxy-3-methylbut-2-enyl diphosphate reductase (315 aa).

Residue Cys-12 participates in [4Fe-4S] cluster binding. Positions 43 and 81 each coordinate (2E)-4-hydroxy-3-methylbut-2-enyl diphosphate. 2 residues coordinate dimethylallyl diphosphate: His-43 and His-81. Positions 43 and 81 each coordinate isopentenyl diphosphate. Cys-103 provides a ligand contact to [4Fe-4S] cluster. His-131 serves as a coordination point for (2E)-4-hydroxy-3-methylbut-2-enyl diphosphate. A dimethylallyl diphosphate-binding site is contributed by His-131. His-131 is a binding site for isopentenyl diphosphate. The active-site Proton donor is Glu-133. Thr-172 serves as a coordination point for (2E)-4-hydroxy-3-methylbut-2-enyl diphosphate. Cys-200 contributes to the [4Fe-4S] cluster binding site. (2E)-4-hydroxy-3-methylbut-2-enyl diphosphate-binding residues include Ser-228, Asn-230, and Ser-273. Residues Ser-228, Asn-230, and Ser-273 each coordinate dimethylallyl diphosphate. Isopentenyl diphosphate-binding residues include Ser-228, Asn-230, and Ser-273.

It belongs to the IspH family. [4Fe-4S] cluster serves as cofactor.

It carries out the reaction isopentenyl diphosphate + 2 oxidized [2Fe-2S]-[ferredoxin] + H2O = (2E)-4-hydroxy-3-methylbut-2-enyl diphosphate + 2 reduced [2Fe-2S]-[ferredoxin] + 2 H(+). It catalyses the reaction dimethylallyl diphosphate + 2 oxidized [2Fe-2S]-[ferredoxin] + H2O = (2E)-4-hydroxy-3-methylbut-2-enyl diphosphate + 2 reduced [2Fe-2S]-[ferredoxin] + 2 H(+). It functions in the pathway isoprenoid biosynthesis; dimethylallyl diphosphate biosynthesis; dimethylallyl diphosphate from (2E)-4-hydroxy-3-methylbutenyl diphosphate: step 1/1. The protein operates within isoprenoid biosynthesis; isopentenyl diphosphate biosynthesis via DXP pathway; isopentenyl diphosphate from 1-deoxy-D-xylulose 5-phosphate: step 6/6. In terms of biological role, catalyzes the conversion of 1-hydroxy-2-methyl-2-(E)-butenyl 4-diphosphate (HMBPP) into a mixture of isopentenyl diphosphate (IPP) and dimethylallyl diphosphate (DMAPP). Acts in the terminal step of the DOXP/MEP pathway for isoprenoid precursor biosynthesis. The sequence is that of 4-hydroxy-3-methylbut-2-enyl diphosphate reductase from Exiguobacterium sibiricum (strain DSM 17290 / CCUG 55495 / CIP 109462 / JCM 13490 / 255-15).